The chain runs to 608 residues: Nuclear protein localization protein 4 homolog (608 aa).

The residue at position 2 (Ala2) is an N-acetylalanine. Lys179 is modified (N6-acetyllysine). The 138-residue stretch at 226-363 (IMFENHTVAD…ICRLSPDGHF (138 aa)) folds into the MPN domain. Residues 580–608 (TSAMWACQHCTFMNQPGTGHCEMCSLPRT) form a RanBP2-type zinc finger.

This sequence belongs to the NPL4 family. Heterodimer with UFD1. The heterodimer binds ubiquitinated proteins. The heterodimer binds to VCP and inhibits Golgi membrane fusion. Interacts with ZFAND2B; probably through VCP.

Its subcellular location is the cytoplasm. The protein resides in the cytosol. It localises to the endoplasmic reticulum. The protein localises to the nucleus. It participates in protein degradation; proteasomal ubiquitin-dependent pathway. Its function is as follows. The ternary complex containing UFD1, VCP and NPLOC4 binds ubiquitinated proteins and is necessary for the export of misfolded proteins from the ER to the cytoplasm, where they are degraded by the proteasome. The NPLOC4-UFD1-VCP complex regulates spindle disassembly at the end of mitosis and is necessary for the formation of a closed nuclear envelope. Acts as a negative regulator of type I interferon production via the complex formed with VCP and UFD1, which binds to RIGI and recruits RNF125 to promote ubiquitination and degradation of RIGI. This is Nuclear protein localization protein 4 homolog (Nploc4) from Mus musculus (Mouse).